Reading from the N-terminus, the 154-residue chain is AP-1 complex subunit sigma-3 (154 aa).

The protein belongs to the adaptor complexes small subunit family. As to quaternary structure, adaptor protein complex 1 (AP-1) is a heterotetramer composed of two large adaptins (gamma-type subunit AP1G1 and beta-type subunit AP1B1), a medium adaptin (mu-type subunit AP1M1 or AP1M2) and a small adaptin (sigma-type subunit AP1S1 or AP1S2 or AP1S3).

The protein localises to the golgi apparatus. It is found in the cytoplasmic vesicle membrane. It localises to the membrane. The protein resides in the clathrin-coated pit. Its function is as follows. Subunit of clathrin-associated adaptor protein complex 1 that plays a role in protein sorting in the late-Golgi/trans-Golgi network (TGN) and/or endosomes. The AP complexes mediate both the recruitment of clathrin to membranes and the recognition of sorting signals within the cytosolic tails of transmembrane cargo molecules. Involved in TLR3 trafficking. This Mus musculus (Mouse) protein is AP-1 complex subunit sigma-3 (Ap1s3).